Here is a 393-residue protein sequence, read N- to C-terminus: Protein TsgA (393 aa).

The next 12 helical transmembrane spans lie at W11–M31, F51–P71, F78–L98, A101–I121, L134–F154, W162–G182, I206–I226, A245–L265, I273–Q293, W298–G318, F332–V352, and L361–V381.

Belongs to the major facilitator superfamily. TsgA family.

The protein resides in the cell inner membrane. The sequence is that of Protein TsgA from Salmonella dublin (strain CT_02021853).